The following is a 396-amino-acid chain: Methionine import ATP-binding protein MetN 2 (396 aa).

The region spanning 41–280 (VSFELVGKVF…PRHGATRALL (240 aa)) is the ABC transporter domain. Residue 77-84 (GRSGAGKS) coordinates ATP.

It belongs to the ABC transporter superfamily. Methionine importer (TC 3.A.1.24) family. The complex is composed of two ATP-binding proteins (MetN), two transmembrane proteins (MetI) and a solute-binding protein (MetQ).

The protein resides in the cell inner membrane. It carries out the reaction L-methionine(out) + ATP + H2O = L-methionine(in) + ADP + phosphate + H(+). The enzyme catalyses D-methionine(out) + ATP + H2O = D-methionine(in) + ADP + phosphate + H(+). Its function is as follows. Part of the ABC transporter complex MetNIQ involved in methionine import. Responsible for energy coupling to the transport system. The polypeptide is Methionine import ATP-binding protein MetN 2 (Burkholderia pseudomallei (strain K96243)).